Here is a 317-residue protein sequence, read N- to C-terminus: Olfactory receptor 6Q1 (317 aa).

At 1 to 27 the chain is on the extracellular side; it reads MQPYTKNWTQVTEFVMMGFAGIHEAHL. A glycan (N-linked (GlcNAc...) asparagine) is linked at asparagine 7. Residues 28 to 48 form a helical membrane-spanning segment; the sequence is LFFILFLTMYLFTLVENLAII. Topologically, residues 49–56 are cytoplasmic; sequence LVVGLDHR. A helical membrane pass occupies residues 57-77; sequence LRRPMYFFLTHLSCLEIWYTS. Residues 78-103 are Extracellular-facing; that stretch reads VTVPKMLAGFIGVDGGKNISYADCLS. The N-linked (GlcNAc...) asparagine glycan is linked to asparagine 95. The cysteines at positions 101 and 193 are disulfide-linked. Residues 104-124 traverse the membrane as a helical segment; the sequence is QLFIFTFLGATECFLLAAMAY. Over 125–143 the chain is Cytoplasmic; sequence DRYVAICMPLHYGAFVSWG. The chain crosses the membrane as a helical span at residues 144–164; the sequence is TCIRLAAACWLVGFLTPILPI. Topologically, residues 165 to 201 are extracellular; it reads YLLSQLTFYGPNVIDHFSCDASPLLALSCSDVTWKET. The chain crosses the membrane as a helical span at residues 202 to 221; sequence VDFLVSLAVLLASSMVIAVS. The Cytoplasmic segment spans residues 222-241; that stretch reads YGNIVWTLLHIRSAAERWKA. Residues 242 to 262 traverse the membrane as a helical segment; the sequence is FSTCAAHLTVVSLFYGTLFFM. At 263-275 the chain is on the extracellular side; sequence YVQTKVTSSINFN. The chain crosses the membrane as a helical span at residues 276 to 296; that stretch reads KVVSVFYSVVTPMLNPLIYSL. Residues 297-317 lie on the Cytoplasmic side of the membrane; sequence RNKEVKGALGRVFSLNFWKGQ.

Belongs to the G-protein coupled receptor 1 family.

The protein localises to the cell membrane. In terms of biological role, odorant receptor. This chain is Olfactory receptor 6Q1 (OR6Q1), found in Homo sapiens (Human).